The primary structure comprises 115 residues: Probable non-functional immunoglobulin heavy variable 3-38-3 (115 aa).

The N-terminal stretch at 1 to 19 is a signal peptide; the sequence is MQFVLSWVFLVAILKGVQC. Residues 20-44 form a framework-1 region; sequence EVQLVESRGVLVQPGGSLRLSCAAS. Residues 31 to 115 form the Ig-like domain; it reads VQPGGSLRLS…EDTAVYYCKK (85 aa). Cysteine 41 and cysteine 113 are disulfide-bonded. Residues 45–52 are complementarity-determining-1; sequence GFTVSSNE. The tract at residues 53-69 is framework-2; it reads MSWVRQAPGKGLEWVSS. A complementarity-determining-2 region spans residues 70–75; that stretch reads ISGGST. A framework-3 region spans residues 76-113; the sequence is YYADSRKGRFTISRDNSKNTLHLQMNSLRAEDTAVYYC. The segment at 114–115 is complementarity-determining-3; it reads KK.

In terms of assembly, immunoglobulins are composed of two identical heavy chains and two identical light chains; disulfide-linked.

It is found in the secreted. The protein resides in the cell membrane. Its function is as follows. Probable non-functional open reading frame (ORF) of V region of the variable domain of immunoglobulin heavy chains. Non-functional ORF generally cannot participate in the synthesis of a productive immunoglobulin chain due to altered V-(D)-J or switch recombination and/or splicing site (at mRNA level) and/or conserved amino acid change (protein level). Immunoglobulins, also known as antibodies, are membrane-bound or secreted glycoproteins produced by B lymphocytes. In the recognition phase of humoral immunity, the membrane-bound immunoglobulins serve as receptors which, upon binding of a specific antigen, trigger the clonal expansion and differentiation of B lymphocytes into immunoglobulins-secreting plasma cells. Secreted immunoglobulins mediate the effector phase of humoral immunity, which results in the elimination of bound antigens. The antigen binding site is formed by the variable domain of one heavy chain, together with that of its associated light chain. Thus, each immunoglobulin has two antigen binding sites with remarkable affinity for a particular antigen. The variable domains are assembled by a process called V-(D)-J rearrangement and can then be subjected to somatic hypermutations which, after exposure to antigen and selection, allow affinity maturation for a particular antigen. The protein is Probable non-functional immunoglobulin heavy variable 3-38-3 of Homo sapiens (Human).